The primary structure comprises 522 residues: Lysine--tRNA ligase (522 aa).

The 'HIGH' region motif lies at 44–52; it reads PSGLPHIGT. Residues 290-294 carry the 'KMSKS' region motif; it reads KISKS. Residue lysine 293 participates in ATP binding.

This sequence belongs to the class-I aminoacyl-tRNA synthetase family.

The protein localises to the cytoplasm. It catalyses the reaction tRNA(Lys) + L-lysine + ATP = L-lysyl-tRNA(Lys) + AMP + diphosphate. This is Lysine--tRNA ligase from Rickettsia africae (strain ESF-5).